Reading from the N-terminus, the 262-residue chain is Thiamine thiazole synthase (262 aa).

NAD(+) contacts are provided by residues S40, 59-60, G67, V133, and 159-161; these read ER and HID. D161 and H176 together coordinate Fe cation. NAD(+) is bound by residues S179 and M226. R236 lines the glycine pocket.

The protein belongs to the THI4 family. In terms of assembly, homooctamer; tetramer of dimers. It depends on Fe(2+) as a cofactor.

It carries out the reaction hydrogen sulfide + glycine + NAD(+) = ADP-5-ethyl-4-methylthiazole-2-carboxylate + nicotinamide + 3 H2O + H(+). Its pathway is cofactor biosynthesis; thiamine diphosphate biosynthesis. In terms of biological role, involved in the biosynthesis of the thiazole moiety of thiamine. Catalyzes the conversion of NAD and glycine to adenosine diphosphate 5-(2-hydroxyethyl)-4-methylthiazole-2-carboxylate (ADT), an adenylated thiazole intermediate, using free sulfide as a source of sulfur. This chain is Thiamine thiazole synthase, found in Methanococcus maripaludis (strain C7 / ATCC BAA-1331).